Here is an 89-residue protein sequence, read N- to C-terminus: Phosphocarrier protein HPr (89 aa).

The HPr domain maps to 1-88; that stretch reads MLKQSIEIIN…DLINGYFGEG (88 aa). Residue His-15 is the Pros-phosphohistidine intermediate of the active site. Ser-46 carries the post-translational modification Phosphoserine; by HPrK/P.

Belongs to the HPr family.

It is found in the cytoplasm. Its activity is regulated as follows. Phosphorylation on Ser-46 inhibits the phosphoryl transfer from enzyme I to HPr. Its function is as follows. General (non sugar-specific) component of the phosphoenolpyruvate-dependent sugar phosphotransferase system (sugar PTS). This major carbohydrate active-transport system catalyzes the phosphorylation of incoming sugar substrates concomitantly with their translocation across the cell membrane. The phosphoryl group from phosphoenolpyruvate (PEP) is transferred to the phosphoryl carrier protein HPr by enzyme I. Phospho-HPr then transfers it to the PTS EIIA domain. This is Phosphocarrier protein HPr (ptsH) from Neisseria meningitidis serogroup A / serotype 4A (strain DSM 15465 / Z2491).